The sequence spans 419 residues: AT-rich binding protein (419 aa).

Residues 29–52 (IVCHTCQEELQTQDAFWKHIQDEH) form a C2H2-type 1 zinc finger. The tract at residues 121-179 (LHEAQHQQQQQQQQHQQQQQQQQHQQQQQHQHHQHQQQQQHLHQQQQQQQQQQRDAAKE) is disordered. Low complexity-rich tracts occupy residues 126–149 (HQQQQQQQQHQQQQQQQQHQQQQQ) and 156–173 (QQQQQHLHQQQQQQQQQQ). 2 C2H2-type zinc fingers span residues 352-376 (YVCDYGTCGIKFKYKSRMELHRVVH) and 382-405 (FNCDMCSASFKQSCNLSTHRKKKH).

It localises to the nucleus. Functionally, may be a transcription factor for genes having (A+T) stretches in their promoter and/or enhancer regions. Binds to AT rich DNA. The sequence is that of AT-rich binding protein from Drosophila grimshawi (Hawaiian fruit fly).